Reading from the N-terminus, the 285-residue chain is Steroidogenic acute regulatory protein, mitochondrial (285 aa).

The N-terminal 63 residues, 1–63, are a transit peptide targeting the mitochondrion; sequence MLLATFKLCA…RRSSLLGSRL (63 aa). Phosphoserine; by PKA occurs at positions 57 and 195. Residues 67 to 280 form the START domain; that stretch reads LYSDQELAYL…LRKRLESHPA (214 aa).

In terms of assembly, may interact with TSPO. Expressed in gonads, adrenal cortex and kidney.

The protein localises to the mitochondrion. It carries out the reaction cholesterol(in) = cholesterol(out). Its pathway is steroid metabolism; cholesterol metabolism. Plays a key role in steroid hormone synthesis by enhancing the metabolism of cholesterol into pregnenolone. Mediates the transfer of cholesterol from the outer mitochondrial membrane to the inner mitochondrial membrane where it is cleaved to pregnenolone. The protein is Steroidogenic acute regulatory protein, mitochondrial (STAR) of Homo sapiens (Human).